A 182-amino-acid polypeptide reads, in one-letter code: Large ribosomal subunit protein uL5m (182 aa).

Belongs to the universal ribosomal protein uL5 family.

Its subcellular location is the mitochondrion. The chain is Large ribosomal subunit protein uL5m (RPL5) from Reclinomonas americana.